Consider the following 66-residue polypeptide: Stress-associated endoplasmic reticulum protein 1 (66 aa).

Residues 1-33 form a disordered region; the sequence is MVAKQRIRMANEKHSKNITQRGNVAKTSRNAPG. At 1–38 the chain is on the cytoplasmic side; sequence MVAKQRIRMANEKHSKNITQRGNVAKTSRNAPGEKASV. The segment covering 17-30 has biased composition (polar residues); sequence NITQRGNVAKTSRN. The helical transmembrane segment at 39–59 threads the bilayer; sequence GPWLLALFIFVVCGSAIFQII. The Extracellular segment spans residues 60–66; that stretch reads QSIRMGM.

It belongs to the RAMP4 family. As to quaternary structure, interacts with SEC61B, SEC61A1 and the SEC61 complex. Interacts with CANX.

It localises to the membrane. The protein localises to the endoplasmic reticulum membrane. Its function is as follows. Interacts with target proteins during their translocation into the lumen of the endoplasmic reticulum. Protects unfolded target proteins against degradation during ER stress. May facilitate glycosylation of target proteins after termination of ER stress. May modulate the use of N-glycosylation sites on target proteins. This Pongo abelii (Sumatran orangutan) protein is Stress-associated endoplasmic reticulum protein 1 (SERP1).